Reading from the N-terminus, the 274-residue chain is 2,3,4,5-tetrahydropyridine-2,6-dicarboxylate N-succinyltransferase (274 aa).

Residues arginine 105 and aspartate 142 each contribute to the substrate site.

The protein belongs to the transferase hexapeptide repeat family. In terms of assembly, homotrimer.

It is found in the cytoplasm. The catalysed reaction is (S)-2,3,4,5-tetrahydrodipicolinate + succinyl-CoA + H2O = (S)-2-succinylamino-6-oxoheptanedioate + CoA. The protein operates within amino-acid biosynthesis; L-lysine biosynthesis via DAP pathway; LL-2,6-diaminopimelate from (S)-tetrahydrodipicolinate (succinylase route): step 1/3. This is 2,3,4,5-tetrahydropyridine-2,6-dicarboxylate N-succinyltransferase from Thiobacillus denitrificans (strain ATCC 25259 / T1).